Here is a 416-residue protein sequence, read N- to C-terminus: Gamma-glutamyl phosphate reductase (416 aa).

It belongs to the gamma-glutamyl phosphate reductase family.

The protein localises to the cytoplasm. The enzyme catalyses L-glutamate 5-semialdehyde + phosphate + NADP(+) = L-glutamyl 5-phosphate + NADPH + H(+). It participates in amino-acid biosynthesis; L-proline biosynthesis; L-glutamate 5-semialdehyde from L-glutamate: step 2/2. Functionally, catalyzes the NADPH-dependent reduction of L-glutamate 5-phosphate into L-glutamate 5-semialdehyde and phosphate. The product spontaneously undergoes cyclization to form 1-pyrroline-5-carboxylate. In Salmonella paratyphi A (strain AKU_12601), this protein is Gamma-glutamyl phosphate reductase.